The primary structure comprises 78 residues: Protein SlyX homolog (78 aa).

The protein belongs to the SlyX family.

This is Protein SlyX homolog from Xanthomonas euvesicatoria pv. vesicatoria (strain 85-10) (Xanthomonas campestris pv. vesicatoria).